Reading from the N-terminus, the 321-residue chain is XylDLEGF operon transcriptional activator 1 (321 aa).

The HTH araC/xylS-type domain occupies 214–315 (ERVVQFIEEN…GELPSDTLRQ (102 aa)). 2 consecutive DNA-binding regions (H-T-H motif) follow at residues 231–252 (ERLA…EKHA) and 282–305 (ITEI…RSAF).

The protein localises to the cytoplasm. Its function is as follows. Regulatory protein of the TOL plasmid xyl operons. XylS activates the xylXYZLTEGFJQKIH operon required for the degradation of toluene, m-xylene and p-xylene. This chain is XylDLEGF operon transcriptional activator 1 (xylS1), found in Pseudomonas putida (Arthrobacter siderocapsulatus).